Here is a 429-residue protein sequence, read N- to C-terminus: Tol-Pal system protein TolB (429 aa).

The N-terminal stretch at 1–22 is a signal peptide; sequence MTRRLFILITIMLCLIPALLHS. Disordered regions lie at residues 362–383 and 407–429; these read PDGT…RWSP and GSGQ…SPRW. The span at 363 to 374 shows a compositional bias: polar residues; sequence DGTNDTRLTSEG.

The protein belongs to the TolB family. In terms of assembly, the Tol-Pal system is composed of five core proteins: the inner membrane proteins TolA, TolQ and TolR, the periplasmic protein TolB and the outer membrane protein Pal. They form a network linking the inner and outer membranes and the peptidoglycan layer.

The protein localises to the periplasm. Its function is as follows. Part of the Tol-Pal system, which plays a role in outer membrane invagination during cell division and is important for maintaining outer membrane integrity. The protein is Tol-Pal system protein TolB of Geobacter metallireducens (strain ATCC 53774 / DSM 7210 / GS-15).